A 548-amino-acid polypeptide reads, in one-letter code: Uridine-cytidine kinase-like 1 (548 aa).

Over residues 1 to 18 (MAAPPASMSAAPSPLQSA) the composition is skewed to low complexity. A disordered region spans residues 1 to 74 (MAAPPASMSA…CKSEPPLLRT (74 aa)). Phosphoserine occurs at positions 56 and 63. 105–112 (GGSASGKT) is an ATP binding site. S539 is modified (phosphoserine).

The protein belongs to the uridine kinase family. Interacts with RNF19B. Ubiquitinated by RNF19B; which induces proteasomal degradation.

It localises to the cytoplasm. It is found in the nucleus. The enzyme catalyses uridine + ATP = UMP + ADP + H(+). It carries out the reaction cytidine + ATP = CMP + ADP + H(+). It participates in pyrimidine metabolism; UMP biosynthesis via salvage pathway; UMP from uridine: step 1/1. Functionally, may contribute to UTP accumulation needed for blast transformation and proliferation. The chain is Uridine-cytidine kinase-like 1 (Uckl1) from Mus musculus (Mouse).